The sequence spans 258 residues: Ubiquinone/menaquinone biosynthesis C-methyltransferase UbiE (258 aa).

Residues T81, D102, and 130–131 each bind S-adenosyl-L-methionine; that span reads NA.

Belongs to the class I-like SAM-binding methyltransferase superfamily. MenG/UbiE family.

It carries out the reaction a 2-demethylmenaquinol + S-adenosyl-L-methionine = a menaquinol + S-adenosyl-L-homocysteine + H(+). The enzyme catalyses a 2-methoxy-6-(all-trans-polyprenyl)benzene-1,4-diol + S-adenosyl-L-methionine = a 5-methoxy-2-methyl-3-(all-trans-polyprenyl)benzene-1,4-diol + S-adenosyl-L-homocysteine + H(+). It participates in quinol/quinone metabolism; menaquinone biosynthesis; menaquinol from 1,4-dihydroxy-2-naphthoate: step 2/2. Its pathway is cofactor biosynthesis; ubiquinone biosynthesis. Functionally, methyltransferase required for the conversion of demethylmenaquinol (DMKH2) to menaquinol (MKH2) and the conversion of 2-polyprenyl-6-methoxy-1,4-benzoquinol (DDMQH2) to 2-polyprenyl-3-methyl-6-methoxy-1,4-benzoquinol (DMQH2). This chain is Ubiquinone/menaquinone biosynthesis C-methyltransferase UbiE, found in Allorhizobium ampelinum (strain ATCC BAA-846 / DSM 112012 / S4) (Agrobacterium vitis (strain S4)).